The chain runs to 639 residues: Putative oxidoreductase UacF (639 aa).

5 4Fe-4S ferredoxin-type domains span residues 3-32, 47-77, 78-107, 110-139, and 201-235; these read KFIA…ENWP, KGQA…TFQS, DSVQ…MVDT, QKCD…LMDD, and QQAT…YIRL. [4Fe-4S] cluster contacts are provided by Cys12, Cys15, Cys18, Cys22, Cys56, Cys59, Cys64, Cys68, Cys87, Cys90, Cys93, Cys97, Cys112, Cys115, Cys125, Cys129, Cys210, Cys213, Cys219, and Cys223.

Requires [4Fe-4S] cluster as cofactor.

In terms of biological role, involved in formate-dependent uric acid degradation under microaerobic and anaerobic conditions. May reduce the enzymes necessary for uric acid degradation. The polypeptide is Putative oxidoreductase UacF (Escherichia coli (strain K12)).